A 357-amino-acid polypeptide reads, in one-letter code: UDP-3-O-acylglucosamine N-acyltransferase (357 aa).

His251 (proton acceptor) is an active-site residue.

Belongs to the transferase hexapeptide repeat family. LpxD subfamily. Homotrimer.

The catalysed reaction is a UDP-3-O-[(3R)-3-hydroxyacyl]-alpha-D-glucosamine + a (3R)-hydroxyacyl-[ACP] = a UDP-2-N,3-O-bis[(3R)-3-hydroxyacyl]-alpha-D-glucosamine + holo-[ACP] + H(+). It participates in bacterial outer membrane biogenesis; LPS lipid A biosynthesis. In terms of biological role, catalyzes the N-acylation of UDP-3-O-acylglucosamine using 3-hydroxyacyl-ACP as the acyl donor. Is involved in the biosynthesis of lipid A, a phosphorylated glycolipid that anchors the lipopolysaccharide to the outer membrane of the cell. The polypeptide is UDP-3-O-acylglucosamine N-acyltransferase (Ralstonia pickettii (strain 12J)).